A 106-amino-acid polypeptide reads, in one-letter code: Large ribosomal subunit protein eL42 (106 aa).

Residues 1–29 (MVNIPKTRRTYCKGKACRKHTPHKVTQYK) show a composition bias toward basic residues. The interval 1 to 56 (MVNIPKTRRTYCKGKACRKHTPHKVTQYKKGKDSLSAQGKRRYDRKQSGYGGQTKP) is disordered.

It belongs to the eukaryotic ribosomal protein eL42 family.

In Cryptococcus neoformans var. neoformans serotype D (strain B-3501A) (Filobasidiella neoformans), this protein is Large ribosomal subunit protein eL42 (RPL44).